The primary structure comprises 338 residues: MSLPVLQGTGFQFRRILSFFPQDISLAFTYGSGVFRQAGSSHNDVRNKMLDFVFAVDDPVTWHTMNIIQNRSHYSFLKFLGPKHITAVQNNYGAGVYYNTLVPCDGRLIKYGVVSTETLLQDLLHWRTLYIAGRLHKPVKILTQRDDGRLKSALTSNLKSALNAAFLMLPESFSEEELYLQIAGLSYAGDFRMIIGEDKDKVLNIVKPNVPHFQKLYAAILLDCPLAVYKAQQGRVEVDKSPEGQYQQLMALPKKLQQNITALVDPPGKNRDVEEILLQVAQDPDCSSVIQQALYGIVRSSSLSQSAKGIVTAGVKKSVQYSSKKLYKMLRSLRRGKS.

This sequence belongs to the TAM41 family. It depends on Mg(2+) as a cofactor.

The protein localises to the mitochondrion inner membrane. The catalysed reaction is a 1,2-diacyl-sn-glycero-3-phosphate + CTP + H(+) = a CDP-1,2-diacyl-sn-glycerol + diphosphate. The protein operates within phospholipid metabolism; CDP-diacylglycerol biosynthesis; CDP-diacylglycerol from sn-glycerol 3-phosphate: step 3/3. Catalyzes the conversion of phosphatidic acid (PA) to CDP-diacylglycerol (CDP-DAG), an essential intermediate in the synthesis of phosphatidylglycerol, cardiolipin and phosphatidylinositol. This is Phosphatidate cytidylyltransferase, mitochondrial (tamm41) from Xenopus laevis (African clawed frog).